Reading from the N-terminus, the 427-residue chain is MAYHNHLSQDLPLHHFTDQTHHQHQQYQSDQPDPNSKPPEPHHSFQPAPNWLNSALLRNFTNTDTNPTNSNNANNNGGGVSNFLNLHVTASDSAASQASNQWLSQSHRPILHRNHSDVNDDVTVAGDSMIAAALSHDSADLKPDSILNKNEGGGGDGGVMNWQNARHKAEILAHPLYEPLLSAHVACLRIATPVDQLPRIDAQLAQSQNVVAKYSALGNGMVGDDKELDQFMRNYVLLLCSFKEQLQQHVRVHAMEAVMACWEIEQSLQSLTGVSPGEGTSATMSDDEDDQVDSDANLFDEGMEGHDSMGFGPLIPTESERSLMERVRQELKHELKQGYKEKIVDIREEILRKRRAGKLPGDTTSVLKAWWQSHSKWPYPTEEDKARLVQETGLQLKQINNWFINQRKRNWHSNPSTSTVLKSKRKR.

Disordered stretches follow at residues 19–49 (QTHHQHQQYQSDQPDPNSKPPEPHHSFQPAP) and 272–291 (TGVSPGEGTSATMSDDEDDQ). The segment covering 272–284 (TGVSPGEGTSATM) has biased composition (polar residues). Positions 330–350 (ELKHELKQGYKEKIVDIREEI) constitute an ELK domain. A DNA-binding region (homeobox; TALE-type) is located at residues 351–414 (LRKRRAGKLP…NQRKRNWHSN (64 aa)).

It belongs to the TALE/KNOX homeobox family. In terms of tissue distribution, maximally expressed in sepals, petals and fully expanded leaves. Also expressed in other flower organs and in developing leaves. Low level expression in stem internodes.

Its subcellular location is the nucleus. This Malus domestica (Apple) protein is Homeobox protein knotted-1-like 3.